Here is a 637-residue protein sequence, read N- to C-terminus: Chaperone protein HtpG (637 aa).

The segment at 1–347 (MTQSVHAETH…SNDLPLNVSR (347 aa)) is a; substrate-binding. Residues 348–564 (EILQDNKVTV…NHGMSTQMIK (217 aa)) are b. Residues 565–637 (LMRAAGQPVP…SRINRLLLQA (73 aa)) are c.

This sequence belongs to the heat shock protein 90 family. Homodimer.

It localises to the cytoplasm. Molecular chaperone. Has ATPase activity. The polypeptide is Chaperone protein HtpG (Aeromonas salmonicida (strain A449)).